Reading from the N-terminus, the 177-residue chain is B-phycoerythrin beta chain (177 aa).

Phycourobilin is bound by residues Cys50 and Cys61. The residue at position 72 (Asn72) is an N4-methylasparagine. Cys82 and Cys158 together coordinate (2R,3E)-phycoerythrobilin.

This sequence belongs to the phycobiliprotein family. In terms of assembly, heteromer of 6 alpha, 6 beta and one gamma chain. Contains two covalently linked phycoerythrobilin chromophores and one covalently linked phycourobilin chromophore.

It localises to the plastid. It is found in the chloroplast thylakoid membrane. Light-harvesting photosynthetic bile pigment-protein from the phycobiliprotein complex. The chain is B-phycoerythrin beta chain (cpeB) from Porphyridium purpureum (Red alga).